Here is a 401-residue protein sequence, read N- to C-terminus: Inactive leucine-rich repeat receptor-like protein kinase CORYNE (401 aa).

The signal sequence occupies residues 1–33; sequence MKQRRRRNGCSSSNTISLLLLFFLVFFSRTSTS. The Extracellular segment spans residues 34–62; that stretch reads TSCRRRTVKHLSTTSTSSTPLESRITSKV. Residues 63 to 83 traverse the membrane as a helical segment; it reads IVISIVSGILTGLVSALVLAF. The Cytoplasmic portion of the chain corresponds to 84-401; sequence LVRSIVKFMK…VHMLTQLHSF (318 aa). A Protein kinase domain is found at 118 to 401; it reads SNGIQLLGSD…VHMLTQLHSF (284 aa). Residues 124 to 132 and K146 contribute to the ATP site; that span reads LGSDLNGKY.

The protein belongs to the protein kinase superfamily. Ser/Thr protein kinase family. As to quaternary structure, self-interacts. Parts of a tetrameric complex made of two CLV2/CRN heterodimers that can interact with CLV3 and CLE peptides. CLV2/CRN heterodimer interacts with CLV1 homodimers. Interacts with CLV1 and CLV2. CLV2/CRN heterodimer can interact with BAM3. In terms of tissue distribution, present in roots, stems, leaves, inflorescence, flowers and siliques. Mostly expressed in shoot tips and, to a lesser extent, in young organs and roots. Also expressed in the inner tissues of the proximal root meristem. Expressed in the vascular cylinder of root tips, mostly in phloem poles.

The protein localises to the cell membrane. It is found in the endoplasmic reticulum membrane. In terms of biological role, involved in the perception of CLV3 and CLV3-like (CLE) peptides, that act as extracellular signals regulating meristem maintenance. Modulates root, shoot and flower apical meristem maintenance and floral organ development regulation, probably via CLAVATA (CLV)-like pathways involving at least CLV3 and CLE19. In complex with CLV2, perceives secreted CLV3-like effector proteins from plant-parasitic cyst nematodes as ligand mimics of the plant CLE signaling pathway. This recognition is required for proper feeding structure (syncytium) development and ultimately successful nematode infection. CLE14 perception by CLV2/CRN complex triggers root meristem differentiation. Required for the sensing of the root CLE peptides (e.g. CLE8, CLE9/CLE10, CLE11, CLE13, CLE14, CLE16, CLE17, CLE18, CLE20, CLE21, CLE25, CLE26, CLE40, CLE41/CLE44 and CLE45), which also involves CLV2 and leads to root growth regulation, mostly in the phloem and protophloem. Promotes the accumulation of BAM3, especially at later stages of protophloem development. In Arabidopsis thaliana (Mouse-ear cress), this protein is Inactive leucine-rich repeat receptor-like protein kinase CORYNE.